Reading from the N-terminus, the 136-residue chain is Large ribosomal subunit protein bL17 (136 aa).

This sequence belongs to the bacterial ribosomal protein bL17 family. As to quaternary structure, part of the 50S ribosomal subunit. Contacts protein L32.

The chain is Large ribosomal subunit protein bL17 from Rhodopseudomonas palustris (strain BisB5).